The chain runs to 281 residues: Probable feruloyl esterase A (281 aa).

An N-terminal signal peptide occupies residues 1–21; that stretch reads MKNFFSMHAILLACSAGAGLA. 3 cysteine pairs are disulfide-bonded: Cys-50–Cys-279, Cys-112–Cys-115, and Cys-248–Cys-255. Asp-98 serves as a coordination point for substrate. Asn-100 is a glycosylation site (N-linked (GlcNAc...) asparagine). Tyr-101 is a substrate binding site. The Nucleophile role is filled by Ser-154. A glycan (N-linked (GlcNAc...) asparagine) is linked at Asn-173. Catalysis depends on Asp-215, which acts as the Charge relay system. His-268 provides a ligand contact to substrate. His-268 (charge relay system) is an active-site residue.

It belongs to the AB hydrolase superfamily. FaeA family.

It localises to the secreted. It carries out the reaction feruloyl-polysaccharide + H2O = ferulate + polysaccharide.. Its function is as follows. Involved in degradation of plant cell walls. Hydrolyzes the feruloyl-arabinose ester bond in arabinoxylans, and the feruloyl-galactose ester bond in pectin. In Aspergillus oryzae (strain ATCC 42149 / RIB 40) (Yellow koji mold), this protein is Probable feruloyl esterase A (faeA).